A 1036-amino-acid polypeptide reads, in one-letter code: Ephrin type-A receptor 6 (1036 aa).

The first 22 residues, 1-22 (MGGCEVREFLLQFGFFLPLLTA), serve as a signal peptide directing secretion. Residues 23–550 (WPGDCSHVSN…MAAEQGQILV (528 aa)) are Extracellular-facing. An Eph LBD domain is found at 34–212 (QVVLLDTTTV…FYKKCPFTVR (179 aa)). Fibronectin type-III domains are found at residues 331–441 (PPSA…TDQD) and 442–537 (APSL…TGDE). N-linked (GlcNAc...) asparagine glycans are attached at residues asparagine 343, asparagine 397, and asparagine 410. Residues 551-571 (IATAAVGGFTLLVILTLFFLI) form a helical membrane-spanning segment. Residues 572 to 1036 (TGRCQWYIKA…MHIQEKGFHV (465 aa)) are Cytoplasmic-facing. Phosphotyrosine; by autocatalysis occurs at positions 606 and 612. A Protein kinase domain is found at 631 to 944 (IRIERVIGAG…RNPSALHTLV (314 aa)). ATP-binding positions include 637–645 (IGAGEFGEV) and lysine 663. Aspartate 798 acts as the Proton acceptor in catalysis. Tyrosine 831 and tyrosine 978 each carry phosphotyrosine; by autocatalysis. An SAM domain is found at 961–1025 (PLFVTVGDWL…VSSIQTLRLH (65 aa)). The PDZ-binding signature appears at 1034–1036 (FHV).

Belongs to the protein kinase superfamily. Tyr protein kinase family. Ephrin receptor subfamily. As to quaternary structure, heterotetramer upon binding of the ligand. The heterotetramer is composed of an ephrin dimer and a receptor dimer. Oligomerization is probably required to induce biological responses. Interacts (via SAM domain) with ANKS1A (via SAM domain). Expressed in brain and testis.

The protein localises to the membrane. The catalysed reaction is L-tyrosyl-[protein] + ATP = O-phospho-L-tyrosyl-[protein] + ADP + H(+). Its function is as follows. Receptor tyrosine kinase which binds promiscuously GPI-anchored ephrin-A family ligands residing on adjacent cells, leading to contact-dependent bidirectional signaling into neighboring cells. The signaling pathway downstream of the receptor is referred to as forward signaling while the signaling pathway downstream of the ephrin ligand is referred to as reverse signaling. This chain is Ephrin type-A receptor 6 (EPHA6), found in Homo sapiens (Human).